A 249-amino-acid chain; its full sequence is Type III pantothenate kinase (249 aa).

6-13 (DCGNSLIK) contributes to the ATP binding site. Substrate is bound by residues Tyr-93 and 100 to 103 (GLDR). Asp-102 functions as the Proton acceptor in the catalytic mechanism. Residue Asp-122 coordinates K(+). Thr-125 contacts ATP. Thr-181 contributes to the substrate binding site.

This sequence belongs to the type III pantothenate kinase family. As to quaternary structure, homodimer. Requires NH4(+) as cofactor. It depends on K(+) as a cofactor.

The protein localises to the cytoplasm. The catalysed reaction is (R)-pantothenate + ATP = (R)-4'-phosphopantothenate + ADP + H(+). It functions in the pathway cofactor biosynthesis; coenzyme A biosynthesis; CoA from (R)-pantothenate: step 1/5. In terms of biological role, catalyzes the phosphorylation of pantothenate (Pan), the first step in CoA biosynthesis. In Pseudomonas paraeruginosa (strain DSM 24068 / PA7) (Pseudomonas aeruginosa (strain PA7)), this protein is Type III pantothenate kinase.